Consider the following 204-residue polypeptide: HTH-type transcriptional repressor KstR (204 aa).

Residues 18 to 78 (RERRKRILDA…SALGREFERI (61 aa)) form the HTH tetR-type domain. Residues 41–60 (QMRAVAERADVAVGTLYRYF) constitute a DNA-binding region (H-T-H motif).

As to quaternary structure, homodimer.

Controls the expression of genes used for utilizing diverse lipids as energy sources. The protein is HTH-type transcriptional repressor KstR (kstR) of Mycolicibacterium smegmatis (strain ATCC 700084 / mc(2)155) (Mycobacterium smegmatis).